A 123-amino-acid chain; its full sequence is Aberrant microtubules protein 1 (123 aa).

Its function is as follows. Required for normal microtubule organization. In Saccharomyces cerevisiae (strain ATCC 204508 / S288c) (Baker's yeast), this protein is Aberrant microtubules protein 1 (ABM1).